Here is an 85-residue protein sequence, read N- to C-terminus: UPF0386 protein Bind_1628 (85 aa).

The protein belongs to the UPF0386 family.

The polypeptide is UPF0386 protein Bind_1628 (Beijerinckia indica subsp. indica (strain ATCC 9039 / DSM 1715 / NCIMB 8712)).